Reading from the N-terminus, the 423-residue chain is MIRIPRGTQDILPEDSSKWRYIENQLDKLMKLYNYKEIRTPIFESTDLFARGVGDSTDVVQKEMYTFKDKGDRSITLRPEGTAAVVRSYIENKMQGIPNQPVKLYYNGPMFRYERKQKGRYRQFTQFGVEAIGAENPSMDAEVLAMVMHIYESFGLKHLKLVINSIGDADSRKEYNEALIRHFEPVIDTFCDDCKSRLHTNPMRILDCKIDRDKEAVKNAPRITDYLNDDSKAYFNEVKTHLDDLGISYVEDPNLVRGLDYYTHTAFELMMDNPNYDGAITTLCGGGRYNGLLELLDGPNQTGIGFALSIERLLLALEEEGIELDVEDTFDLFIVTMGEEAERYSVKLLNQLRKSGIKADKDYLQRKVKGQMKQADRLNAQYTVVIGDQELENEVIDVKDMSTGETETINLNNLVNYFQEKNN.

This sequence belongs to the class-II aminoacyl-tRNA synthetase family. As to quaternary structure, homodimer.

It is found in the cytoplasm. The enzyme catalyses tRNA(His) + L-histidine + ATP = L-histidyl-tRNA(His) + AMP + diphosphate + H(+). This is Histidine--tRNA ligase from Staphylococcus haemolyticus (strain JCSC1435).